The chain runs to 210 residues: Somatotropin (210 aa).

The first 22 residues, 1–22, serve as a signal peptide directing secretion; the sequence is MAKALVLLSLVLVSVFVNNGTA. H38 contacts Zn(2+). The cysteines at positions 71 and 183 are disulfide-linked. E192 contacts Zn(2+). Cysteines 200 and 208 form a disulfide.

This sequence belongs to the somatotropin/prolactin family.

Its subcellular location is the secreted. Growth hormone plays an important role in growth control and is involved in the regulation of several anabolic processes. Implicated as an osmoregulatory substance important for seawater adaptation. The chain is Somatotropin (gh) from Misgurnus mizolepis (Chinese weatherloach).